The following is a 141-amino-acid chain: MAIERTLSIIKPDAVAKNVIGQIYARFEAAGLKIVAAKMVHLSRGEAEQFYAVHKERPFFKDLVDFMVSGPVMIQALEGENAIAKNRDLMGATDPKKAEKGTIRADFADSIDANAVHGSDAAETAAVEVSFFFPGMNVYSR.

The ATP site is built by Lys-11, Phe-59, Arg-87, Thr-93, Arg-104, and Asn-114. The Pros-phosphohistidine intermediate role is filled by His-117.

It belongs to the NDK family. Homotetramer. The cofactor is Mg(2+).

The protein resides in the cytoplasm. The enzyme catalyses a 2'-deoxyribonucleoside 5'-diphosphate + ATP = a 2'-deoxyribonucleoside 5'-triphosphate + ADP. It carries out the reaction a ribonucleoside 5'-diphosphate + ATP = a ribonucleoside 5'-triphosphate + ADP. Functionally, major role in the synthesis of nucleoside triphosphates other than ATP. The ATP gamma phosphate is transferred to the NDP beta phosphate via a ping-pong mechanism, using a phosphorylated active-site intermediate. The protein is Nucleoside diphosphate kinase of Cupriavidus necator (strain ATCC 17699 / DSM 428 / KCTC 22496 / NCIMB 10442 / H16 / Stanier 337) (Ralstonia eutropha).